The following is a 187-amino-acid chain: CASP-like protein SELMODRAFT_416718 (187 aa).

Residues 1–21 (MMFGGVGMATLPLSLIFAFKN) form a helical membrane-spanning segment. The Extracellular portion of the chain corresponds to 22 to 100 (RPKCVITRAQ…EAFPQGEKAD (79 aa)). The helical transmembrane segment at 101–119 (TSWALTVLFYLAKLVFGIL) threads the bilayer. Topologically, residues 120 to 125 (GLALSV) are cytoplasmic. A helical membrane pass occupies residues 126 to 145 (IWLLHIIVFMLVNPPAFPFL). At 146–155 (NQVFIQLDSA) the chain is on the extracellular side. The helical transmembrane segment at 156–176 (WGLLGTTAFAIFCYYLVMSVI) threads the bilayer. Topologically, residues 177 to 187 (SGEMHSIYPMK) are cytoplasmic.

This sequence belongs to the Casparian strip membrane proteins (CASP) family. In terms of assembly, homodimer and heterodimers.

The protein resides in the cell membrane. The polypeptide is CASP-like protein SELMODRAFT_416718 (Selaginella moellendorffii (Spikemoss)).